A 245-amino-acid chain; its full sequence is tRNA1(Val) (adenine(37)-N6)-methyltransferase (245 aa).

This sequence belongs to the methyltransferase superfamily. tRNA (adenine-N(6)-)-methyltransferase family.

It is found in the cytoplasm. It carries out the reaction adenosine(37) in tRNA1(Val) + S-adenosyl-L-methionine = N(6)-methyladenosine(37) in tRNA1(Val) + S-adenosyl-L-homocysteine + H(+). Specifically methylates the adenine in position 37 of tRNA(1)(Val) (anticodon cmo5UAC). This Escherichia coli O7:K1 (strain IAI39 / ExPEC) protein is tRNA1(Val) (adenine(37)-N6)-methyltransferase.